The following is a 140-amino-acid chain: 3-hydroxyacyl-[acyl-carrier-protein] dehydratase FabZ (140 aa).

Histidine 48 is a catalytic residue.

Belongs to the thioester dehydratase family. FabZ subfamily.

It is found in the cytoplasm. It catalyses the reaction a (3R)-hydroxyacyl-[ACP] = a (2E)-enoyl-[ACP] + H2O. Functionally, involved in unsaturated fatty acids biosynthesis. Catalyzes the dehydration of short chain beta-hydroxyacyl-ACPs and long chain saturated and unsaturated beta-hydroxyacyl-ACPs. The chain is 3-hydroxyacyl-[acyl-carrier-protein] dehydratase FabZ from Pelotomaculum thermopropionicum (strain DSM 13744 / JCM 10971 / SI).